The primary structure comprises 99 residues: U11-barytoxin-Tl1a (99 aa).

The N-terminal stretch at 1 to 21 (MKTLVLVAVLGLASLYLLSYA) is a signal peptide. Positions 22 to 50 (SEVQQISRDEEDFRALMASFGGIFDTEER) are excised as a propeptide. Cystine bridges form between cysteine 57-cysteine 71, cysteine 64-cysteine 76, and cysteine 70-cysteine 90.

It belongs to the neurotoxin 10 (Hwtx-1) family. 25 (ICK4) subfamily. As to expression, expressed by the venom gland.

The protein resides in the secreted. Its function is as follows. Ion channel inhibitor. The polypeptide is U11-barytoxin-Tl1a (Trittame loki (Brush-footed trapdoor spider)).